The sequence spans 475 residues: MAFGKSHRDPYATSLGHLIEKATFAGVQTEDWGQFMHICDIINTTQDGPKDAVKALKKRISKNYNHKEIQLSLSLIDMCMQNCGPSFQSLIVKKEFVKDTLVKLLNPRYTLPLETQNRILSFIKMWSQGFPGGVDVSEVKEVYLDLLKKGVQFPPLDGEPETKQEAGQISPSRPTSVPTAPALSSIIAPKNPTISLVPEQIGKLHSELDMVKMNVKVMTAILMENTPGSENHEDIELLRKLYKTGREMQERIMDLLVVVENEDVTVELIQVNEDLNNAILGYERFTRNQQRLLEQKRNPTEANQTSSEPSAPSCDLLNLGPVAPVPVSSEGPLNSVNAQLSGLNVSSQSPVITNNLYPSLQPQMDLLASEDTEVPTLFPQRTSQNLASSHTYDNFPDHSSSVLLQPVSLHTAPAAPSSQRLPPLPSNHPVLKNSALQPPSYYEVMEFDPLAPTTEAIYEEIDASHKKGAQSHSEC.

The VHS domain maps to 22-154; the sequence is ATFAGVQTED…DLLKKGVQFP (133 aa). The interval 155 to 175 is disordered; that stretch reads PLDGEPETKQEAGQISPSRPT. Positions 165–175 are enriched in polar residues; sequence EAGQISPSRPT. Serine 170 is subject to Phosphoserine. In terms of domain architecture, GAT spans 199–287; that stretch reads EQIGKLHSEL…AILGYERFTR (89 aa). The tract at residues 296-317 is disordered; it reads KRNPTEANQTSSEPSAPSCDLL. Positions 300 to 310 are enriched in polar residues; the sequence is TEANQTSSEPS. A Phosphoserine modification is found at serine 313. Residues 392-395 form an interaction with GRB2 region; sequence YDNF. Residues 421–425 carry the SH3-binding motif; that stretch reads LPPLP. Residues 442–445 are interaction with PIK3R1; the sequence is YEVM. Tyrosine 458 is subject to Phosphotyrosine. Residues 458 to 461 carry the SH2-binding motif; that stretch reads YEEI.

This sequence belongs to the TOM1 family. In terms of assembly, interacts with the SH2 and SH3 domains of FYN when phosphorylated. Also interacts with GRB2 and PIK3R1 when phosphorylated. Interacts with LYN. Post-translationally, phosphorylated on tyrosines by FYN and LYN.

Its subcellular location is the golgi apparatus. It is found in the golgi stack. It localises to the endosome membrane. The protein localises to the cytoplasm. The protein resides in the membrane. Functionally, probable adapter protein involved in signaling pathways. Interacts with the SH2 and SH3 domains of various signaling proteins when it is phosphorylated. May promote FYN activation, possibly by disrupting intramolecular SH3-dependent interactions. The sequence is that of TOM1-like protein 1 (Tom1l1) from Rattus norvegicus (Rat).